A 1806-amino-acid chain; its full sequence is Atrochrysone carboxylic acid synthase (1806 aa).

The tract at residues 30 to 283 (DLQGLFRRLY…SLPVYSGLCH (254 aa)) is N-terminal acylcarrier protein transacylase domain (SAT). In terms of domain architecture, Ketosynthase family 3 (KS3) spans 416-850 (QSKIAIIGMS…GGNTTVCLEE (435 aa)). Residues Cys589, His725, and His768 each act as for beta-ketoacyl synthase activity in the active site. Positions 951 to 1270 (FAFTGQGASY…SLTALHCAGV (320 aa)) are malonyl-CoA:ACP transacylase (MAT) domain. The tract at residues 1340-1659 (TSTVQQIIEE…RILLNRFFTA (320 aa)) is product template (PT) domain. The segment at 1344–1479 (QQIIEESFNG…ASILYDDAAL (136 aa)) is N-terminal hotdog fold. Residues 1344 to 1654 (QQIIEESFNG…FRRYPRILLN (311 aa)) form the PKS/mFAS DH domain. The active-site Proton acceptor; for dehydratase activity is the His1376. A C-terminal hotdog fold region spans residues 1506–1654 (IANRFTRNMA…FRRYPRILLN (149 aa)). Residue Asp1565 is the Proton donor; for dehydratase activity of the active site. The tract at residues 1668–1726 (HAAASSTPAPRTKPEPVPVATPATAAAPVAQSPAAPASVTPAPAPAPAPGPTPAAAPAA) is disordered. Low complexity predominate over residues 1685 to 1708 (PVATPATAAAPVAQSPAAPASVTP). Pro residues predominate over residues 1709-1721 (APAPAPAPGPTPA). The Carrier domain occupies 1728-1805 (GESDSVAAKA…DLRSWLLEYY (78 aa)). Ser1765 bears the O-(pantetheine 4'-phosphoryl)serine mark.

The enzyme catalyses holo-[ACP] + 8 malonyl-CoA + 8 H(+) = atrochrysone carboxyl-[ACP] + 8 CO2 + 8 CoA + 2 H2O. It participates in secondary metabolite biosynthesis. In terms of biological role, atrochrysone carboxylic acid synthase; part of the gene cluster that mediates the biosynthesis of monodictyphenone, a prenyl xanthone derivative. The pathway begins with the synthesis of atrochrysone thioester by the polyketide synthase (PKS) mdpG. The atrochrysone carboxyl ACP thioesterase mdpF then breaks the thioester bond and releases the atrochrysone carboxylic acid from mdpG. The atrochrysone carboxylic acid is then converted to atrochrysone which is further transformed into emodin anthrone. The next step is performed by the anthrone oxygenase mdpH that catalyzes the oxidation of emodinanthrone to emodin. Emodin is further modified to yield monodictyphenone via several steps involving mdpB, mdpC mdpJ, mdpK and mdpL. The short chain dehydrogenase mdpC converts the tautomers of emodin hydroquinone into the 3-hydroxy-3,4-dihydroan-thracen-1(2H)-one derivative. These enzymes with xptA, xptB and xptC are also proposed to be involved in the synthesis of shamixanthone from emodin. Especially, direct reduction of emodin by the short chain dehydrogenase mdpC followed by dehydration catalyzed by the scytalone dehydratase-like protein mdpB gives loss of oxygen and formation of chrysophanol intermediate in two simple steps. The chain is Atrochrysone carboxylic acid synthase from Emericella nidulans (strain FGSC A4 / ATCC 38163 / CBS 112.46 / NRRL 194 / M139) (Aspergillus nidulans).